The following is a 342-amino-acid chain: Glycerol-3-phosphate dehydrogenase [NAD(P)+] (342 aa).

NADPH is bound by residues W11, R31, and K102. Positions 102 and 132 each coordinate sn-glycerol 3-phosphate. A136 serves as a coordination point for NADPH. Positions 187, 240, 250, 251, and 252 each coordinate sn-glycerol 3-phosphate. Residue K187 is the Proton acceptor of the active site. Position 251 (R251) interacts with NADPH. Residue E277 coordinates NADPH.

The protein belongs to the NAD-dependent glycerol-3-phosphate dehydrogenase family.

The protein resides in the cytoplasm. It catalyses the reaction sn-glycerol 3-phosphate + NAD(+) = dihydroxyacetone phosphate + NADH + H(+). The enzyme catalyses sn-glycerol 3-phosphate + NADP(+) = dihydroxyacetone phosphate + NADPH + H(+). Its pathway is membrane lipid metabolism; glycerophospholipid metabolism. Its function is as follows. Catalyzes the reduction of the glycolytic intermediate dihydroxyacetone phosphate (DHAP) to sn-glycerol 3-phosphate (G3P), the key precursor for phospholipid synthesis. The protein is Glycerol-3-phosphate dehydrogenase [NAD(P)+] of Symbiobacterium thermophilum (strain DSM 24528 / JCM 14929 / IAM 14863 / T).